The sequence spans 379 residues: Putative zinc metalloprotease BR1156/BS1330_I1152 (379 aa).

His-33 contacts Zn(2+). The active site involves Glu-34. His-37 contributes to the Zn(2+) binding site. 4 helical membrane passes run 39 to 61 (LVAR…ELLG), 122 to 144 (VFAG…FALY), 305 to 327 (FDWL…LFPL), and 355 to 377 (IFYR…NDLF). A PDZ domain is found at 133-208 (TIAIFSVFFA…LNFTVERDGK (76 aa)).

It belongs to the peptidase M50B family. Requires Zn(2+) as cofactor.

The protein localises to the cell inner membrane. In Brucella suis biovar 1 (strain 1330), this protein is Putative zinc metalloprotease BR1156/BS1330_I1152.